A 518-amino-acid chain; its full sequence is Metalloprotease TIKI2 (518 aa).

The N-terminal stretch at 1-22 (MNCQSGLRWLVTLCAFFQVGSA) is a signal peptide. Residues 23 to 499 (RDTHESTRQC…SALDSAAPNP (477 aa)) lie on the Extracellular side of the membrane. 5 N-linked (GlcNAc...) asparagine glycosylation sites follow: Asn-224, Asn-233, Asn-282, Asn-325, and Asn-340. Residues 500 to 517 (TYALTCFLACLISQLLFA) traverse the membrane as a helical segment. Ser-518 is a topological domain (cytoplasmic).

It belongs to the TIKI family. Mn(2+) serves as cofactor. The cofactor is Co(2+).

Its subcellular location is the cell membrane. Metalloprotease that acts as a negative regulator of the Wnt signaling pathway by mediating the cleavage of the N-terminal residues of a subset of Wnt proteins. Following cleavage, Wnt proteins become oxidized and form large disulfide-bond oligomers, leading to their inactivation. This chain is Metalloprotease TIKI2 (trabd2b), found in Danio rerio (Zebrafish).